The primary structure comprises 421 residues: Diaminobutyrate--2-oxoglutarate transaminase (421 aa).

Lys-262 carries the N6-(pyridoxal phosphate)lysine modification.

It belongs to the class-III pyridoxal-phosphate-dependent aminotransferase family. It depends on pyridoxal 5'-phosphate as a cofactor.

The catalysed reaction is L-2,4-diaminobutanoate + 2-oxoglutarate = L-aspartate 4-semialdehyde + L-glutamate. It participates in amine and polyamine biosynthesis; ectoine biosynthesis; L-ectoine from L-aspartate 4-semialdehyde: step 1/3. In terms of biological role, catalyzes reversively the conversion of L-aspartate beta-semialdehyde (ASA) to L-2,4-diaminobutyrate (DABA) by transamination with L-glutamate. This Vibrio parahaemolyticus serotype O3:K6 (strain RIMD 2210633) protein is Diaminobutyrate--2-oxoglutarate transaminase (ectB).